Here is a 202-residue protein sequence, read N- to C-terminus: MRTSHLLEQLMEALRCLPGVGPKSAQRMAFNLLQRNRQGGLQLADALNRAMTDIGHCRDCRTFTEDDICAVCANPRRQENGQICVVESPADIVAVESTGQFSGRYFVLMGHLSPLDGIGPSDIGLDTLEFRLQKETIAELILATNPTVEGEATAHYIAELCHEYGVPATRIAHGVPVGGELELVDGTTLSHSLAGRQKLNLY.

The segment at 57–72 (CRDCRTFTEDDICAVC) adopts a C4-type zinc-finger fold. The 96-residue stretch at 81–176 (GQICVVESPA…PATRIAHGVP (96 aa)) folds into the Toprim domain.

The protein belongs to the RecR family.

May play a role in DNA repair. It seems to be involved in an RecBC-independent recombinational process of DNA repair. It may act with RecF and RecO. The chain is Recombination protein RecR from Photobacterium profundum (strain SS9).